The chain runs to 433 residues: MRVLVLGSGVIGTASAYYLARQGFEVTVVDRQPAVAMETSFANAGQISPGYASPWAAPGVPLKAIKWLLERHAPLAIKLTGDVDQYLWMAQMLRNCTASRYAVNKERMVRLSEYSRDCLDELRAETGIAYESRTLGTTQLFRTQAQLDAAAKDIAVLEQSGVPYELLDRDGIARVEPALAGVKDILAGALRLPNDQTGDCQLFTTKLAEMALKLGVEFRFGQDIQRLDFAGDRINGVWVDGKLETADRYVLALGSYSPQMLKPLGIKAPVYPLKGYSLTVPITNADMAPTSTILDETYKVAITRFDNRIRVGGMAEIAGFDLSLNPRRRETLEMIVNDLYPRGGDLSQASFWTGLRPATPDGTPIVGATAFRNLFLNTGHGTLGWTMACGSGRLLADLIARKKPQISAEGLDISRYGKTREVAKQGHTAPVHQ.

An FAD-binding site is contributed by 3 to 17 (VLVLGSGVIGTASAY).

The protein belongs to the DadA oxidoreductase family. Requires FAD as cofactor.

It catalyses the reaction a D-alpha-amino acid + A + H2O = a 2-oxocarboxylate + AH2 + NH4(+). It functions in the pathway amino-acid degradation; D-alanine degradation; NH(3) and pyruvate from D-alanine: step 1/1. Functionally, oxidative deamination of D-amino acids. In Pseudomonas putida (strain W619), this protein is D-amino acid dehydrogenase.